We begin with the raw amino-acid sequence, 273 residues long: 3-methyl-2-oxobutanoate hydroxymethyltransferase (273 aa).

The Mg(2+) site is built by Asp53 and Asp92. 3-methyl-2-oxobutanoate-binding positions include 53–54, Asp92, and Lys122; that span reads DS. Mg(2+) is bound at residue Glu124. Glu191 functions as the Proton acceptor in the catalytic mechanism.

The protein belongs to the PanB family. In terms of assembly, homodecamer; pentamer of dimers. Mg(2+) is required as a cofactor.

The protein localises to the cytoplasm. The catalysed reaction is 3-methyl-2-oxobutanoate + (6R)-5,10-methylene-5,6,7,8-tetrahydrofolate + H2O = 2-dehydropantoate + (6S)-5,6,7,8-tetrahydrofolate. It functions in the pathway cofactor biosynthesis; (R)-pantothenate biosynthesis; (R)-pantoate from 3-methyl-2-oxobutanoate: step 1/2. Catalyzes the reversible reaction in which hydroxymethyl group from 5,10-methylenetetrahydrofolate is transferred onto alpha-ketoisovalerate to form ketopantoate. In Parabacteroides distasonis (strain ATCC 8503 / DSM 20701 / CIP 104284 / JCM 5825 / NCTC 11152), this protein is 3-methyl-2-oxobutanoate hydroxymethyltransferase.